Here is a 258-residue protein sequence, read N- to C-terminus: Polysialic acid transport protein KpsM (258 aa).

Residues 1-30 (MARSGFEVQKVTVEALFLREIRTRFGKFRL) are Cytoplasmic-facing. In terms of domain architecture, ABC transmembrane type-2 spans 30–251 (LGYLWAILEP…FIGLALYRTR (222 aa)). Residues 31–54 (GYLWAILEPSAHLLILLGILGYVM) traverse the membrane as a helical segment. At 55 to 61 (HRTMPDI) the chain is on the periplasmic side. The helical transmembrane segment at 62–81 (SFPVFLLNGLIPFFIFSSIS) threads the bilayer. The Cytoplasmic portion of the chain corresponds to 82 to 108 (KRSIGAIEANQGLFNYRPVKPIDTIIA). A helical membrane pass occupies residues 109–132 (RALLETLIYVAVYILLMLIVWMTG). Topologically, residues 133–143 (EYFEITNFLQL) are periplasmic. The helical transmembrane segment at 144 to 165 (VLTWSLLIILSCGVGLIFMVVG) threads the bilayer. At 166-174 (KTFPEMQKV) the chain is on the cytoplasmic side. The helical transmembrane segment at 175–195 (LPILLKPLYFISCIMFPLHSI) threads the bilayer. The Periplasmic segment spans residues 196–226 (PKQYWSYLLWNPLVHVVELSREAVMPGYISE). Residues 227–247 (GVSLNYLAMFTLVTLFIGLAL) form a helical membrane-spanning segment. Topologically, residues 248-258 (YRTREEAMLTS) are cytoplasmic.

Belongs to the ABC-2 integral membrane protein family.

The protein localises to the cell inner membrane. KpsM and KpsT constitute a system for the transport of polysialic acid across the cytoplasmic membrane. The polypeptide is Polysialic acid transport protein KpsM (kpsM) (Escherichia coli).